The chain runs to 268 residues: Chymotrypsin-C (268 aa).

Residues 1–16 (MLGITVLAAILACASC) form the signal peptide. A propeptide spans 17-29 (CGNPAFPPNLSTR) (activation peptide). 5 cysteine pairs are disulfide-bonded: C17/C141, C59/C75, C155/C222, C186/C202, and C212/C243. Residue N25 is glycosylated (N-linked (GlcNAc...) asparagine). The Peptidase S1 domain maps to 30–267 (VVGGEDAVPN…YNDWINEKIQ (238 aa)). Catalysis depends on H74, which acts as the Charge relay system. N90 carries N-linked (GlcNAc...) asparagine glycosylation. D121 serves as the catalytic Charge relay system. The active-site Charge relay system is the S216.

This sequence belongs to the peptidase S1 family. Elastase subfamily. Pancreas.

The enzyme catalyses Preferential cleavage: Leu-|-Xaa, Tyr-|-Xaa, Phe-|-Xaa, Met-|-Xaa, Trp-|-Xaa, Gln-|-Xaa, Asn-|-Xaa.. Functionally, regulates activation and degradation of trypsinogens and procarboxypeptidases by targeting specific cleavage sites within their zymogen precursors. Has chymotrypsin-type protease activity and hypocalcemic activity. Cleaves TRY4 and TRY5 and thereby inhibits their autoactivation. This chain is Chymotrypsin-C (Ctrc), found in Rattus norvegicus (Rat).